A 435-amino-acid chain; its full sequence is 5-methylthioadenosine/S-adenosylhomocysteine deaminase (435 aa).

Positions 65 and 67 each coordinate Zn(2+). Glu-94, Arg-150, and His-189 together coordinate substrate. His-216 lines the Zn(2+) pocket. 2 residues coordinate substrate: Glu-219 and Asp-304. Asp-304 is a binding site for Zn(2+).

Belongs to the metallo-dependent hydrolases superfamily. MTA/SAH deaminase family. The cofactor is Zn(2+).

It carries out the reaction S-adenosyl-L-homocysteine + H2O + H(+) = S-inosyl-L-homocysteine + NH4(+). The catalysed reaction is S-methyl-5'-thioadenosine + H2O + H(+) = S-methyl-5'-thioinosine + NH4(+). Catalyzes the deamination of 5-methylthioadenosine and S-adenosyl-L-homocysteine into 5-methylthioinosine and S-inosyl-L-homocysteine, respectively. Is also able to deaminate adenosine. The polypeptide is 5-methylthioadenosine/S-adenosylhomocysteine deaminase (Bacillus cereus (strain ZK / E33L)).